A 171-amino-acid chain; its full sequence is 3-hydroxydecanoyl-[acyl-carrier-protein] dehydratase (171 aa).

H70 is a catalytic residue.

This sequence belongs to the thioester dehydratase family. FabA subfamily. In terms of assembly, homodimer.

Its subcellular location is the cytoplasm. It catalyses the reaction a (3R)-hydroxyacyl-[ACP] = a (2E)-enoyl-[ACP] + H2O. It carries out the reaction (3R)-hydroxydecanoyl-[ACP] = (2E)-decenoyl-[ACP] + H2O. The catalysed reaction is (2E)-decenoyl-[ACP] = (3Z)-decenoyl-[ACP]. It functions in the pathway lipid metabolism; fatty acid biosynthesis. Its function is as follows. Necessary for the introduction of cis unsaturation into fatty acids. Catalyzes the dehydration of (3R)-3-hydroxydecanoyl-ACP to E-(2)-decenoyl-ACP and then its isomerization to Z-(3)-decenoyl-ACP. Can catalyze the dehydratase reaction for beta-hydroxyacyl-ACPs with saturated chain lengths up to 16:0, being most active on intermediate chain length. The polypeptide is 3-hydroxydecanoyl-[acyl-carrier-protein] dehydratase (Stutzerimonas stutzeri (strain A1501) (Pseudomonas stutzeri)).